The primary structure comprises 294 residues: 4-hydroxy-tetrahydrodipicolinate synthase (294 aa).

A pyruvate-binding site is contributed by threonine 44. Tyrosine 132 acts as the Proton donor/acceptor in catalysis. The active-site Schiff-base intermediate with substrate is the lysine 161. Isoleucine 206 provides a ligand contact to pyruvate.

Belongs to the DapA family. In terms of assembly, homotetramer; dimer of dimers.

The protein localises to the cytoplasm. The catalysed reaction is L-aspartate 4-semialdehyde + pyruvate = (2S,4S)-4-hydroxy-2,3,4,5-tetrahydrodipicolinate + H2O + H(+). It participates in amino-acid biosynthesis; L-lysine biosynthesis via DAP pathway; (S)-tetrahydrodipicolinate from L-aspartate: step 3/4. Functionally, catalyzes the condensation of (S)-aspartate-beta-semialdehyde [(S)-ASA] and pyruvate to 4-hydroxy-tetrahydrodipicolinate (HTPA). The protein is 4-hydroxy-tetrahydrodipicolinate synthase of Thermotoga petrophila (strain ATCC BAA-488 / DSM 13995 / JCM 10881 / RKU-1).